The chain runs to 138 residues: Acidic phospholipase A2 ammodytin I1 (138 aa).

An N-terminal signal peptide occupies residues 1 to 16 (MRILWIVAVCLIGAEG). Intrachain disulfides connect Cys-42/Cys-131, Cys-44/Cys-60, Cys-59/Cys-111, Cys-65/Cys-138, Cys-66/Cys-104, Cys-73/Cys-97, and Cys-91/Cys-102. Residues Tyr-43, Gly-45, and Gly-47 each contribute to the Ca(2+) site. The active site involves His-63. Ca(2+) is bound at residue Asp-64. The active site involves Asp-105.

It belongs to the phospholipase A2 family. Group II subfamily. D49 sub-subfamily. The cofactor is Ca(2+). In terms of tissue distribution, expressed by the venom gland.

The protein resides in the secreted. It carries out the reaction a 1,2-diacyl-sn-glycero-3-phosphocholine + H2O = a 1-acyl-sn-glycero-3-phosphocholine + a fatty acid + H(+). Functionally, snake venom phospholipase A2 (PLA2) that has enzymatic activity but is non-toxic. PLA2 catalyzes the calcium-dependent hydrolysis of the 2-acyl groups in 3-sn-phosphoglycerides. This is Acidic phospholipase A2 ammodytin I1 from Vipera ammodytes ammodytes (Western sand viper).